A 191-amino-acid polypeptide reads, in one-letter code: Ribosome hibernation promotion factor (191 aa).

A disordered region spans residues 100-123 (KQRQEGRPEPLPGPAEAEVNAQGS).

This sequence belongs to the HPF/YfiA ribosome-associated protein family. Long HPF subfamily. As to quaternary structure, interacts with 100S ribosomes.

It localises to the cytoplasm. Its function is as follows. Required for dimerization of active 70S ribosomes into 100S ribosomes in stationary phase; 100S ribosomes are translationally inactive and sometimes present during exponential growth. In Deinococcus radiodurans (strain ATCC 13939 / DSM 20539 / JCM 16871 / CCUG 27074 / LMG 4051 / NBRC 15346 / NCIMB 9279 / VKM B-1422 / R1), this protein is Ribosome hibernation promotion factor.